The chain runs to 80 residues: uncharacterized protein (80 aa).

This is an uncharacterized protein from Schizosaccharomyces pombe (strain 972 / ATCC 24843) (Fission yeast).